Here is a 528-residue protein sequence, read N- to C-terminus: Potassium voltage-gated channel subfamily A member 3 (528 aa).

The segment at 1–32 (MTVVPGDHLLEPEAAGGGGGDPPQGGCGSGGG) is disordered. Residues 1 to 187 (MTVVPGDHLL…EYPESSGPAR (187 aa)) lie on the Cytoplasmic side of the membrane. Residues 15-32 (AGGGGGDPPQGGCGSGGG) show a composition bias toward gly residues. A helical membrane pass occupies residues 188 to 206 (GIAIVSVLVILISIVIFCL). Residues 207–247 (ETLPEFRDEKDYPASPSQDVFEAANNSTSGAPSGASSFSDP) lie on the Extracellular side of the membrane. N-linked (GlcNAc...) asparagine glycosylation occurs at Asn232. Residues 248-269 (FFVVETLCIIWFSFELLVRFFA) form a helical membrane-spanning segment. Cys270 carries S-palmitoyl cysteine lipidation. Over 270–280 (CPSKATFSRNI) the chain is Cytoplasmic. The helical transmembrane segment at 281–301 (MNLIDIVAIIPYFITLGTELA) threads the bilayer. Residues 302 to 315 (ERQGNGQQAMSLAI) lie on the Extracellular side of the membrane. The chain crosses the membrane as a helical; Voltage-sensor span at residues 316-334 (LRVIRLVRVFRIFKLSRHS). Residues 335-350 (KGLQILGQTLKASMRE) are Cytoplasmic-facing. A helical transmembrane segment spans residues 351-370 (LGLLIFFLFIGVILFSSAVY). Residues 371-411 (FAEADDPSSGFNSIPDAFWWAVVTMTTVGYGDMHPVTIGGK) are Extracellular-facing. The Selectivity filter motif lies at 397-402 (TVGYGD). Residues 412 to 434 (IVGSLCAIAGVLTIALPVPVIVS) traverse the membrane as a helical segment. Topologically, residues 435-528 (NFNYFYHRET…VNIKKIFTDV (94 aa)) are cytoplasmic. The segment at 435-528 (NFNYFYHRET…VNIKKIFTDV (94 aa)) is interaction with KCNE4. Tyr452 bears the Phosphotyrosine mark. Residue Ser473 is modified to Phosphoserine; by PKA. The PDZ-binding signature appears at 526 to 528 (TDV).

This sequence belongs to the potassium channel family. A (Shaker) (TC 1.A.1.2) subfamily. Kv1.3/KCNA3 sub-subfamily. Homotetramer. Forms heterooligomers with KCNE4 which inhibits KCNA3 activity by impairing localization to the cell membrane. The stoichiometry of KCNA3 and KCNE4 in the heterooligomers are 4:1, 4:2, 4:3 or 4:4 respectively. Increasing the number of KCNE4 subunits steadily slows the activation KCNA3 and decreases its abundance at the cell membrane. However, a single subunit of KCNE4 is sufficient for the cooperative enhancement of the inactivating function of the channel. Interacts with SEC24D; this interaction is reduced in the presence of KCNE4. Interacts with DLG1, DLG2 and DLG4 via their PDZ domains. In terms of processing, N-glycosylation promotes the cell surface expression. Phosphorylation on Tyr-452 inhibits its channel activity.

It localises to the cell membrane. It catalyses the reaction K(+)(in) = K(+)(out). Its activity is regulated as follows. Activity is up-regulated by JAK2. Its function is as follows. Mediates the voltage-dependent potassium ion permeability of excitable membranes. Assuming opened or closed conformations in response to the voltage difference across the membrane, the protein forms a potassium-selective channel through which potassium ions may pass in accordance with their electrochemical gradient. This chain is Potassium voltage-gated channel subfamily A member 3 (Kcna3), found in Mus musculus (Mouse).